Consider the following 601-residue polypeptide: Glutathione-regulated potassium-efflux system protein KefB (601 aa).

The next 13 helical transmembrane spans lie at 4–24, 29–49, 55–75, 87–107, 115–135, 152–172, 177–197, 207–227, 230–250, 268–288, 291–311, 324–344, and 356–376; these read SDFLLAGVLFLFAAVAAVPLA, IGAVLGYLLAGIAIGPWGLGF, EILHFSELGVVFLMFIIGLEL, IFGVGAAQVLLSAALLAGLLM, AAVVGGIGLAMSSTAMALQLM, VLLFQDLAVIPALALVPLLAG, HFDWMKVGMKVLAFVGMLIGG, FIAASGVREVFTAATLLLVLG, LFMDALGLSMALGTFIAGVLL, GLLLGLFFISVGMSLNLGVLY, LLWVVISVVVLVAVKILVLYL, MQFAGVLSQGGEFAFVLFSTA, and ALLLVTVTLSMMTTPLLMKLV. The RCK N-terminal domain maps to 400 to 519; that stretch reads KPQVIVVGFG…AGVTQFSRET (120 aa).

The protein belongs to the monovalent cation:proton antiporter 2 (CPA2) transporter (TC 2.A.37) family. KefB subfamily. In terms of assembly, interacts with the regulatory subunit KefG.

It localises to the cell inner membrane. Activated by adducts between glutathione and electrophiles. Its function is as follows. Pore-forming subunit of a potassium efflux system that confers protection against electrophiles. Catalyzes K(+)/H(+) antiport. This Escherichia coli (strain K12) protein is Glutathione-regulated potassium-efflux system protein KefB.